Consider the following 227-residue polypeptide: Cytochrome c oxidase subunit 2 (227 aa).

The Mitochondrial intermembrane segment spans residues 1–14; that stretch reads MAYPFQLGFQDATS. The helical transmembrane segment at 15-45 threads the bilayer; the sequence is PIMEELLHFHDHTLMIVFLISSLVLYIISSM. Topologically, residues 46–59 are mitochondrial matrix; it reads LTTKLTHTSTMDAQ. A helical membrane pass occupies residues 60-87; the sequence is EVETIWTILPAIILILIALPSLRILYMM. Residues 88–227 are Mitochondrial intermembrane-facing; that stretch reads DEINNPSLTV…YFEEWSASML (140 aa). Cu cation contacts are provided by histidine 161, cysteine 196, glutamate 198, cysteine 200, histidine 204, and methionine 207. Residue glutamate 198 participates in Mg(2+) binding.

It belongs to the cytochrome c oxidase subunit 2 family. Component of the cytochrome c oxidase (complex IV, CIV), a multisubunit enzyme composed of 14 subunits. The complex is composed of a catalytic core of 3 subunits MT-CO1, MT-CO2 and MT-CO3, encoded in the mitochondrial DNA, and 11 supernumerary subunits COX4I, COX5A, COX5B, COX6A, COX6B, COX6C, COX7A, COX7B, COX7C, COX8 and NDUFA4, which are encoded in the nuclear genome. The complex exists as a monomer or a dimer and forms supercomplexes (SCs) in the inner mitochondrial membrane with NADH-ubiquinone oxidoreductase (complex I, CI) and ubiquinol-cytochrome c oxidoreductase (cytochrome b-c1 complex, complex III, CIII), resulting in different assemblies (supercomplex SCI(1)III(2)IV(1) and megacomplex MCI(2)III(2)IV(2)). Found in a complex with TMEM177, COA6, COX18, COX20, SCO1 and SCO2. Interacts with TMEM177 in a COX20-dependent manner. Interacts with COX20. Interacts with COX16. Cu cation serves as cofactor.

It is found in the mitochondrion inner membrane. It carries out the reaction 4 Fe(II)-[cytochrome c] + O2 + 8 H(+)(in) = 4 Fe(III)-[cytochrome c] + 2 H2O + 4 H(+)(out). Functionally, component of the cytochrome c oxidase, the last enzyme in the mitochondrial electron transport chain which drives oxidative phosphorylation. The respiratory chain contains 3 multisubunit complexes succinate dehydrogenase (complex II, CII), ubiquinol-cytochrome c oxidoreductase (cytochrome b-c1 complex, complex III, CIII) and cytochrome c oxidase (complex IV, CIV), that cooperate to transfer electrons derived from NADH and succinate to molecular oxygen, creating an electrochemical gradient over the inner membrane that drives transmembrane transport and the ATP synthase. Cytochrome c oxidase is the component of the respiratory chain that catalyzes the reduction of oxygen to water. Electrons originating from reduced cytochrome c in the intermembrane space (IMS) are transferred via the dinuclear copper A center (CU(A)) of subunit 2 and heme A of subunit 1 to the active site in subunit 1, a binuclear center (BNC) formed by heme A3 and copper B (CU(B)). The BNC reduces molecular oxygen to 2 water molecules using 4 electrons from cytochrome c in the IMS and 4 protons from the mitochondrial matrix. This chain is Cytochrome c oxidase subunit 2 (MT-CO2), found in Equus asinus (Donkey).